The chain runs to 370 residues: GTPase Obg (370 aa).

The Obg domain occupies 1-159 (MKFIDEARIE…RMLKLELKVL (159 aa)). A disordered region spans residues 128–147 (LHFKSSTNRAPRQKTDGKPG). The OBG-type G domain occupies 160-334 (ADVGLLGMPN…LCYAIYDYLS (175 aa)). GTP-binding positions include 166-173 (GMPNAGKS), 191-195 (FTTLA), 213-216 (DIPG), 284-287 (NKLD), and 315-317 (SAL). Positions 173 and 193 each coordinate Mg(2+).

The protein belongs to the TRAFAC class OBG-HflX-like GTPase superfamily. OBG GTPase family. As to quaternary structure, monomer. The cofactor is Mg(2+).

It localises to the cytoplasm. In terms of biological role, an essential GTPase which binds GTP, GDP and possibly (p)ppGpp with moderate affinity, with high nucleotide exchange rates and a fairly low GTP hydrolysis rate. Plays a role in control of the cell cycle, stress response, ribosome biogenesis and in those bacteria that undergo differentiation, in morphogenesis control. This Burkholderia orbicola (strain MC0-3) protein is GTPase Obg.